A 360-amino-acid chain; its full sequence is Phospho-N-acetylmuramoyl-pentapeptide-transferase (360 aa).

Transmembrane regions (helical) follow at residues 21–41 (YLSFRAIVSILTALGISLWMG), 73–93 (TMGGVMILAAITITVLLWADL), 94–114 (TNPYVWAVLAVLLGYGAVGFV), 132–152 (WKYFWQSAIALVVAFALYAHG), 168–188 (VMPQLGLMYIVLTYFVIVGTS), 199–219 (GLAIMPTVLVAAGFAAIAWAT), 239–259 (LVVVCTAMVGAGLGFLWFNTY), 263–283 (VFMGDVGALALGGALGTIAVL), 288–308 (FVLVIMGGVFVMETLSVILQV), and 338–358 (VIVRFWIISIVLVLIGLATLK).

It belongs to the glycosyltransferase 4 family. MraY subfamily. Mg(2+) is required as a cofactor.

The protein localises to the cell inner membrane. The catalysed reaction is UDP-N-acetyl-alpha-D-muramoyl-L-alanyl-gamma-D-glutamyl-meso-2,6-diaminopimeloyl-D-alanyl-D-alanine + di-trans,octa-cis-undecaprenyl phosphate = di-trans,octa-cis-undecaprenyl diphospho-N-acetyl-alpha-D-muramoyl-L-alanyl-D-glutamyl-meso-2,6-diaminopimeloyl-D-alanyl-D-alanine + UMP. Its pathway is cell wall biogenesis; peptidoglycan biosynthesis. Catalyzes the initial step of the lipid cycle reactions in the biosynthesis of the cell wall peptidoglycan: transfers peptidoglycan precursor phospho-MurNAc-pentapeptide from UDP-MurNAc-pentapeptide onto the lipid carrier undecaprenyl phosphate, yielding undecaprenyl-pyrophosphoryl-MurNAc-pentapeptide, known as lipid I. This chain is Phospho-N-acetylmuramoyl-pentapeptide-transferase, found in Vibrio cholerae serotype O1 (strain M66-2).